A 335-amino-acid polypeptide reads, in one-letter code: Trans-1,2-dihydrobenzene-1,2-diol dehydrogenase (335 aa).

It belongs to the Gfo/Idh/MocA family. In terms of assembly, homodimer. Liver, lens, spleen, kidney and small intestine.

The enzyme catalyses (1R,2R)-1,2-dihydrobenzene-1,2-diol + NADP(+) = catechol + NADPH + H(+). It catalyses the reaction D-xylose + NADP(+) = D-xylono-1,5-lactone + NADPH + H(+). Its activity is regulated as follows. Strongly inhibited by isoascorbic acid, 4-hydroxyacetophenone and chloromercuriphenylsulphonate. Stimulated by various salts. The polypeptide is Trans-1,2-dihydrobenzene-1,2-diol dehydrogenase (DHDH) (Sus scrofa (Pig)).